The following is a 120-amino-acid chain: Large ribosomal subunit protein uL24 (120 aa).

It belongs to the universal ribosomal protein uL24 family. As to quaternary structure, part of the 50S ribosomal subunit.

One of two assembly initiator proteins, it binds directly to the 5'-end of the 23S rRNA, where it nucleates assembly of the 50S subunit. In terms of biological role, located at the polypeptide exit tunnel on the outside of the subunit. The sequence is that of Large ribosomal subunit protein uL24 from Archaeoglobus fulgidus (strain ATCC 49558 / DSM 4304 / JCM 9628 / NBRC 100126 / VC-16).